The chain runs to 88 residues: UPF0473 protein CLL_A1177 (88 aa).

Belongs to the UPF0473 family.

The polypeptide is UPF0473 protein CLL_A1177 (Clostridium botulinum (strain Eklund 17B / Type B)).